Here is a 755-residue protein sequence, read N- to C-terminus: Lysosome membrane protein 2-B (755 aa).

Topologically, residues 1-6 are cytoplasmic; sequence MKHIGR. The chain crosses the membrane as a helical span at residues 7–27; that stretch reads IVSFPIGLVLIAVGIIIFVVV. N-linked (GlcNAc...) asparagine glycans are attached at residues Asn28, Asn76, Asn379, Asn465, Asn497, Asn588, Asn607, and Asn680. The Lumenal portion of the chain corresponds to 28-727; sequence NRTIKDEFKK…AYKVDSFRYA (700 aa). A helical transmembrane segment spans residues 728–748; sequence ITVILIVVGGFLSLISGGLFV. At 749-755 the chain is on the cytoplasmic side; it reads LDKIIDL. The Di-leucine motif signature appears at 752–753; that stretch reads II.

Belongs to the CD36 family. Heavily glycosylated.

It is found in the lysosome membrane. In terms of biological role, may act as a lysosomal receptor. May be involved in macropinocytosis and fluid phase exocytosis. This Dictyostelium discoideum (Social amoeba) protein is Lysosome membrane protein 2-B (lmpB).